We begin with the raw amino-acid sequence, 421 residues long: Proton extrusion protein PxcA (421 aa).

Positions 124 to 153 (PTVHSSNPDDSQLMTSKNNSKPVPDPESDD) are disordered. The segment covering 125–144 (TVHSSNPDDSQLMTSKNNSK) has biased composition (polar residues). Transmembrane regions (helical) follow at residues 203–223 (FVLL…SFIV), 298–318 (AIKN…LLIS), 345–365 (IIIL…WEVI), and 381–401 (FIFL…KYWI).

It belongs to the CemA family.

It localises to the cell inner membrane. Required for H(+) efflux immediately after light irradiation to form a rapid H(+) concentration gradient across the thylakoid membranes. Together with PxcL, contributes to transient H(+) uptake following dark to light transition. This is Proton extrusion protein PxcA from Synechococcus sp. (strain ATCC 27144 / PCC 6301 / SAUG 1402/1) (Anacystis nidulans).